Consider the following 302-residue polypeptide: MSVFIDKNTKVMVQGITGSTALFHTKQMLDYGTKIVAGVTPGKGGQVVEGVPVFNTVEEAKNETGATVSVIYVPAPFAADSILEAADADLDMVICITEHIPVLDMVKVKRYLQGRKTRLVGPNCPGVITADECKIGIMPGYIHKKGHVGVVSRSGTLTYEAVHQLTEEGIGQTTAVGIGGDPVNGTNFIDVLKAFNEDDETKAVVMIGEIGGTAEEEAAEWIKANMTKPVVGFIGGQTAPPGKRMGHAGAIISGGKGTAEEKIKTLNSCGVKTAATPSEIGSTLIEAAKEAGIYELLLTVNK.

CoA-binding positions include 17–20 (TGST), Lys-43, and 96–98 (ITE). Tyr-159 lines the substrate pocket. His-247 acts as the Tele-phosphohistidine intermediate in catalysis.

This sequence belongs to the succinate/malate CoA ligase alpha subunit family. As to quaternary structure, heterotetramer of two alpha and two beta subunits.

The enzyme catalyses succinate + ATP + CoA = succinyl-CoA + ADP + phosphate. The catalysed reaction is GTP + succinate + CoA = succinyl-CoA + GDP + phosphate. It participates in carbohydrate metabolism; tricarboxylic acid cycle; succinate from succinyl-CoA (ligase route): step 1/1. Succinyl-CoA synthetase functions in the citric acid cycle (TCA), coupling the hydrolysis of succinyl-CoA to the synthesis of either ATP or GTP and thus represents the only step of substrate-level phosphorylation in the TCA. The alpha subunit of the enzyme binds the substrates coenzyme A and phosphate, while succinate binding and nucleotide specificity is provided by the beta subunit. The chain is Succinate--CoA ligase [ADP-forming] subunit alpha from Staphylococcus aureus (strain MRSA252).